A 319-amino-acid chain; its full sequence is Protein quaking-B (319 aa).

The KH domain maps to Y87–V153. Positions P276–P279 match the SH3-binding motif.

Belongs to the quaking family. In terms of assembly, homodimer; does not require RNA to homodimerize.

It is found in the cytoplasm. The protein localises to the nucleus. Functionally, RNA reader protein, which recognizes and binds specific RNAs, thereby regulating RNA metabolic processes, such as pre-mRNA splicing, circular RNA (circRNA) formation, mRNA export, mRNA stability and/or translation. Involved in various cellular processes, such as mRNA storage into stress granules, apoptosis, interferon response, glial cell fate and development. Binds to the 5'-NACUAAY-N(1,20)-UAAY-3' RNA core sequence. Acts as a mRNA modification reader that specifically recognizes and binds mRNA transcripts modified by internal N(7)-methylguanine (m7G). Promotes the formation of circular RNAs (circRNAs): acts by binding to sites flanking circRNA-forming exons. CircRNAs are produced by back-splicing circularization of pre-mRNAs. Required to protect and promote stability of mRNAs which promotes oligodendrocyte differentiation. Acts as an important regulator of muscle development: required during early skeletal myofibril formation by regulating the accumulation of the muscle-specific tropomyosin-3 (tpm3) transcripts. The protein is Protein quaking-B (qki2) of Danio rerio (Zebrafish).